Reading from the N-terminus, the 623-residue chain is V-type proton ATPase catalytic subunit A (623 aa).

252–259 (GAFGCGKT) lines the ATP pocket.

The protein belongs to the ATPase alpha/beta chains family. As to quaternary structure, V-ATPase is a heteromultimeric enzyme composed of a peripheral catalytic V1 complex (main components: subunits A, B, C, D, E, and F) attached to an integral membrane V0 proton pore complex (main component: the proteolipid protein).

The enzyme catalyses ATP + H2O + 4 H(+)(in) = ADP + phosphate + 5 H(+)(out). Functionally, catalytic subunit of the peripheral V1 complex of vacuolar ATPase. V-ATPase vacuolar ATPase is responsible for acidifying a variety of intracellular compartments in eukaryotic cells. This chain is V-type proton ATPase catalytic subunit A, found in Citrus unshiu (Satsuma mandarin).